A 49-amino-acid chain; its full sequence is Omega-segestritoxin-Sf1a (49 aa).

Disulfide bonds link Cys3/Cys22, Cys10/Cys27, Cys21/Cys48, and Cys29/Cys46.

As to expression, expressed by the venom gland.

Its subcellular location is the secreted. Its function is as follows. Potent and selective blocker of N-type voltage-gated calcium channels (Cav2.2/CACNA1B). Also blocks vertebrate Cav2.1/CACNA1A (P/Q-type) and Cav1.2/CACNA1C (L-type) channels at very high concentration (2 micromolar). The polypeptide is Omega-segestritoxin-Sf1a (Segestria florentina (Tube-web spider)).